A 240-amino-acid polypeptide reads, in one-letter code: Nicotinamide riboside kinase (240 aa).

13 to 21 (GCSSSGKTT) contacts ATP. Mg(2+) is bound by residues threonine 20 and aspartate 39. Residue aspartate 39 is the Proton acceptor of the active site. Substrate is bound by residues 39-42 (DDFY) and 59-60 (WD). Arginine 158 contributes to the ATP binding site. Substrate contacts are provided by residues arginine 159 and 164-165 (GY). ATP contacts are provided by residues 162–164 (RKG) and 208–210 (KSK).

It belongs to the uridine kinase family. NRK subfamily.

It catalyses the reaction beta-nicotinamide D-riboside + ATP = beta-nicotinamide D-ribonucleotide + ADP + H(+). It carries out the reaction beta-D-ribosylnicotinate + ATP = nicotinate beta-D-ribonucleotide + ADP + H(+). The protein operates within cofactor biosynthesis; NAD(+) biosynthesis. Catalyzes the phosphorylation of nicotinamide riboside (NR) and nicotinic acid riboside (NaR) to form nicotinamide mononucleotide (NMN) and nicotinic acid mononucleotide (NaMN). The polypeptide is Nicotinamide riboside kinase (NRK1) (Saccharomyces cerevisiae (strain ATCC 204508 / S288c) (Baker's yeast)).